The following is a 149-amino-acid chain: Arginine repressor (149 aa).

It belongs to the ArgR family.

It is found in the cytoplasm. It participates in amino-acid biosynthesis; L-arginine biosynthesis [regulation]. Regulates arginine biosynthesis genes. The protein is Arginine repressor of Listeria monocytogenes serotype 4b (strain F2365).